A 103-amino-acid chain; its full sequence is Histone H4 variant TH091 (103 aa).

The disordered stretch occupies residues 1 to 20 (MSGRDKGGKGLGKGGAKRHR). An N-acetylserine modification is found at S2. K6, K9, K13, K17, and K21 each carry N6-acetyllysine. A DNA-binding region spans residues 17 to 21 (KRHRK).

It belongs to the histone H4 family. As to quaternary structure, the nucleosome is a histone octamer containing two molecules each of H2A, H2B, H3 and H4 assembled in one H3-H4 heterotetramer and two H2A-H2B heterodimers. The octamer wraps approximately 147 bp of DNA.

It is found in the nucleus. Its subcellular location is the chromosome. In terms of biological role, core component of nucleosome. Nucleosomes wrap and compact DNA into chromatin, limiting DNA accessibility to the cellular machineries which require DNA as a template. Histones thereby play a central role in transcription regulation, DNA repair, DNA replication and chromosomal stability. DNA accessibility is regulated via a complex set of post-translational modifications of histones, also called histone code, and nucleosome remodeling. This Triticum aestivum (Wheat) protein is Histone H4 variant TH091.